The sequence spans 152 residues: UPF0266 membrane protein ESA_01432 (152 aa).

Helical transmembrane passes span 1–21 (MTLT…WAIY), 45–65 (ADSL…VASH), and 67–87 (ALLT…LFWI).

This sequence belongs to the UPF0266 family.

It localises to the cell inner membrane. The polypeptide is UPF0266 membrane protein ESA_01432 (Cronobacter sakazakii (strain ATCC BAA-894) (Enterobacter sakazakii)).